The chain runs to 175 residues: ATP-dependent protease subunit HslV (175 aa).

Thr-2 is a catalytic residue. Na(+) is bound by residues Ala-156, Cys-159, and Thr-162.

Belongs to the peptidase T1B family. HslV subfamily. A double ring-shaped homohexamer of HslV is capped on each side by a ring-shaped HslU homohexamer. The assembly of the HslU/HslV complex is dependent on binding of ATP.

It is found in the cytoplasm. The catalysed reaction is ATP-dependent cleavage of peptide bonds with broad specificity.. With respect to regulation, allosterically activated by HslU binding. Its function is as follows. Protease subunit of a proteasome-like degradation complex believed to be a general protein degrading machinery. The protein is ATP-dependent protease subunit HslV of Rhizobium johnstonii (strain DSM 114642 / LMG 32736 / 3841) (Rhizobium leguminosarum bv. viciae).